We begin with the raw amino-acid sequence, 183 residues long: Translation initiation factor IF-3 (183 aa).

Belongs to the IF-3 family. As to quaternary structure, monomer.

It is found in the cytoplasm. IF-3 binds to the 30S ribosomal subunit and shifts the equilibrium between 70S ribosomes and their 50S and 30S subunits in favor of the free subunits, thus enhancing the availability of 30S subunits on which protein synthesis initiation begins. This is Translation initiation factor IF-3 from Pseudomonas putida (strain ATCC 700007 / DSM 6899 / JCM 31910 / BCRC 17059 / LMG 24140 / F1).